The primary structure comprises 450 residues: Phospho-2-dehydro-3-deoxyheptonate aldolase (450 aa).

Over residues 1 to 13 (MTVNAKTSPSAGN) the composition is skewed to polar residues. Residues 1–20 (MTVNAKTSPSAGNTWRDLPA) form a disordered region.

The protein belongs to the class-II DAHP synthase family. As to quaternary structure, homodimer.

It catalyses the reaction D-erythrose 4-phosphate + phosphoenolpyruvate + H2O = 7-phospho-2-dehydro-3-deoxy-D-arabino-heptonate + phosphate. It participates in metabolic intermediate biosynthesis; chorismate biosynthesis; chorismate from D-erythrose 4-phosphate and phosphoenolpyruvate: step 1/7. The chain is Phospho-2-dehydro-3-deoxyheptonate aldolase (aroH) from Streptomyces coelicolor (strain ATCC BAA-471 / A3(2) / M145).